The following is a 202-amino-acid chain: Outer-membrane lipoprotein carrier protein (202 aa).

An N-terminal signal peptide occupies residues 1-21; the sequence is MKRLLVACCFLSGLISASALA.

It belongs to the LolA family. Monomer.

The protein localises to the periplasm. In terms of biological role, participates in the translocation of lipoproteins from the inner membrane to the outer membrane. Only forms a complex with a lipoprotein if the residue after the N-terminal Cys is not an aspartate (The Asp acts as a targeting signal to indicate that the lipoprotein should stay in the inner membrane). The chain is Outer-membrane lipoprotein carrier protein from Yersinia pestis bv. Antiqua (strain Antiqua).